The sequence spans 268 residues: Small ribosomal subunit protein eS1 (268 aa).

Residues 1 to 21 (MAVGKNKGLSKGGKKGGKKKV) form a disordered region.

The protein belongs to the eukaryotic ribosomal protein eS1 family. As to quaternary structure, component of the small ribosomal subunit. Mature ribosomes consist of a small (40S) and a large (60S) subunit. The 40S subunit contains about 33 different proteins and 1 molecule of RNA (18S). The 60S subunit contains about 49 different proteins and 3 molecules of RNA (28S, 5.8S and 5S).

Its subcellular location is the cytoplasm. In terms of biological role, essential for oogenesis; required for late follicle cell development. In Drosophila erecta (Fruit fly), this protein is Small ribosomal subunit protein eS1.